A 150-amino-acid chain; its full sequence is Ribosome maturation factor RimP (150 aa).

Belongs to the RimP family.

Its subcellular location is the cytoplasm. Required for maturation of 30S ribosomal subunits. The chain is Ribosome maturation factor RimP from Salmonella dublin (strain CT_02021853).